Reading from the N-terminus, the 483-residue chain is E3 ubiquitin-protein ligase TRIM50 (483 aa).

The RING-type zinc finger occupies 16–57; it reads CPICLEVFKEPLMLQCGHSYCKNCLDSLSEHLDSELRCPVCR. The B box-type zinc finger occupies 84–125; it reads TEPTVCVHHRNPLSLFCEKDQEFICGLCGLLGSHQHHRVTPV. The Zn(2+) site is built by C89, H92, C111, and H117. Coiled-coil stretches lie at residues 127 to 169 and 203 to 236; these read TVYS…NESD and GLVASLDMQLEQAQGTQERLAQAERVLEQFGNES. One can recognise a B30.2/SPRY domain in the interval 275–474; sequence DIKLTVWKRL…LPMVLPPPSA (200 aa). Residue K372 is modified to N6-acetyllysine.

This sequence belongs to the TRIM/RBCC family. As to quaternary structure, can form dimers and trimers. Interacts with several E2 ubiquitin-conjugating enzymes, including UBE2L6, UBE2E1, UBE2E3. No interaction with UBE2H. Interacts with BECN1. Interacts with SQSTM1. Interacts with NLRP3. In terms of processing, auto-ubiquitinated. Acetylated by EP300 and KAT2B. HDAC6 drives TRIM50 deacetylation. Acetylation antagonizes with TRIM50 ubiquitination.

The protein localises to the cytoplasm. It carries out the reaction S-ubiquitinyl-[E2 ubiquitin-conjugating enzyme]-L-cysteine + [acceptor protein]-L-lysine = [E2 ubiquitin-conjugating enzyme]-L-cysteine + N(6)-ubiquitinyl-[acceptor protein]-L-lysine.. E3 ubiquitin-protein ligase that ubiquitinates Beclin-1/BECN1 in a 'Lys-63'-dependent manner enhancing its binding to ULK1. In turn, promotes starvation-induced autophagy activation. Also interacts with p62/SQSTM1 protein and thereby induces the formation and the autophagy clearance of aggresome-associated polyubiquitinated proteins through HDAC6 interaction. Also promotes NLRP3 inflammasome activation by directly inducing NLRP3 oligomerization independent of its E3 ligase function. The polypeptide is E3 ubiquitin-protein ligase TRIM50 (Trim50) (Rattus norvegicus (Rat)).